A 347-amino-acid chain; its full sequence is UPF0324 membrane protein Atu0671 (347 aa).

10 helical membrane-spanning segments follow: residues 15–37, 50–72, 105–127, 140–162, 172–194, 201–223, 233–250, 263–282, 287–309, and 322–344; these read LRWL…AAIL, WLGD…SLPV, AGGL…SYAA, LIAC…AIGA, AFTA…LLGL, IFAG…LGAV, LIRV…SVIH, MVPW…SFGL, LLSP…LGLS, and VIIA…ILLT.

Belongs to the UPF0324 family.

It is found in the cell membrane. The protein is UPF0324 membrane protein Atu0671 of Agrobacterium fabrum (strain C58 / ATCC 33970) (Agrobacterium tumefaciens (strain C58)).